The primary structure comprises 589 residues: Probable translation initiation factor IF-2 (589 aa).

Residues 5–219 (IRTPIVCVLG…IMIGLAQRYL (215 aa)) form the tr-type G domain. Positions 14–21 (GHVDHGKT) are G1. GTP is bound at residue 14-21 (GHVDHGKT). The G2 stretch occupies residues 39–43 (AITQH). A G3 region spans residues 75 to 78 (DTPG). GTP is bound by residues 75 to 79 (DTPGH) and 129 to 132 (TKLD). The segment at 129-132 (TKLD) is G4. A G5 region spans residues 197–199 (SSM).

It belongs to the TRAFAC class translation factor GTPase superfamily. Classic translation factor GTPase family. IF-2 subfamily.

Functionally, function in general translation initiation by promoting the binding of the formylmethionine-tRNA to ribosomes. Seems to function along with eIF-2. This Methanocorpusculum labreanum (strain ATCC 43576 / DSM 4855 / Z) protein is Probable translation initiation factor IF-2.